The primary structure comprises 357 residues: Snake venom metalloproteinase H4 (357 aa).

The signal sequence occupies residues 1–6 (FPYQGS). Residues 7–176 (SIMLESGKVN…KKASQLIVST (170 aa)) constitute a propeptide that is removed on maturation. The region spanning 180-357 (RYMEIVIVVD…EVIKYFLDSK (178 aa)) is the Peptidase M12B domain. His-316 provides a ligand contact to Zn(2+). The active site involves Glu-317. Zn(2+) is bound by residues His-320 and His-326. Cys-333 and Cys-339 are oxidised to a cystine.

Belongs to the venom metalloproteinase (M12B) family. P-I subfamily. As to quaternary structure, monomer. Requires Zn(2+) as cofactor. In terms of tissue distribution, expressed by the venom gland.

The protein resides in the secreted. Functionally, snake venom metalloproteinase that impairs hemostasis in the envenomed animal. This is Snake venom metalloproteinase H4 from Deinagkistrodon acutus (Hundred-pace snake).